A 317-amino-acid polypeptide reads, in one-letter code: Serpentine receptor class delta-47 (317 aa).

7 consecutive transmembrane segments (helical) span residues 8 to 28, 42 to 62, 89 to 109, 128 to 148, 185 to 205, 239 to 259, and 270 to 290; these read IFYPIFLALVFPTQIFLFVVV, VLFCNCIFQTISVVLLCLLQL, CLYFVSQSTSVVSNILVLLTI, IVIILLLVPVFVLVGAEIYSV, YLIISIVFGSVFLLPPMGLYT, ACLPLVSLCPIFVCYVIVIGT, and ISVLVLLPTFFDPYITLYSVA.

The protein belongs to the nematode receptor-like protein srd family.

The protein localises to the membrane. The chain is Serpentine receptor class delta-47 (srd-47) from Caenorhabditis elegans.